Here is a 356-residue protein sequence, read N- to C-terminus: Thrombopoietin (356 aa).

Positions 1–21 (MELTDLLLAAMLLAVARLTLS) are cleaved as a signal peptide. Cystine bridges form between Cys28-Cys172 and Cys50-Cys106. Asn197, Asn206, Asn235, Asn249, Asn256, Asn336, and Asn351 each carry an N-linked (GlcNAc...) asparagine glycan. Residues 291 to 356 (GGLPPSPSLA…PHPRNLSQET (66 aa)) form a disordered region. Positions 330-339 (PSTTMPNSTA) are enriched in polar residues.

Belongs to the EPO/TPO family. Found mainly in the liver, kidney and skeletal muscle.

It is found in the secreted. In terms of biological role, lineage-specific cytokine affecting the proliferation and maturation of megakaryocytes from their committed progenitor cells. It acts at a late stage of megakaryocyte development. It may be the major physiological regulator of circulating platelets. The chain is Thrombopoietin (Thpo) from Mus musculus (Mouse).